Reading from the N-terminus, the 495-residue chain is MNKEILAVVEAVSNEKALPREKIFEALESALATATKKKYEQEIDVRVQIDRKSGDFDTFRRWLVVDEVTQPTKEITLEAARYEDESLNLGDYVEDQIESVTFDRITTQTAKQVIVQKVREAERAMVVDQFREHEGEIITGVVKKVNRDNISLDLGNNAEAVILREDMLPRENFRPGDRVRGVLYSVRPEARGAQLFVTRSKPEMLIELFRIEVPEIGEEVIEIKAAARDPGSRAKIAVKTNDKRIDPVGACVGMRGARVQAVSTELGGERIDIVLWDDNPAQFVINAMAPADVASIVVDEDKHTMDIAVEAGNLAQAIGRNGQNVRLASQLSGWELNVMTVDDLQAKHQAEAHAAIDTFTKYLDIDEDFATVLVEEGFSTLEELAYVPMKELLEIEGLDEPTVEALRERAKNALATIAQAQEESLGDNKPADDLLNLEGVDRDLAFKLAARGVCTLEDLAEQGIDDLADIEGLTDEKAGALIMAARNICWFGDEA.

Residues 135 to 200 (GEIITGVVKK…RGAQLFVTRS (66 aa)) enclose the S1 motif domain. The KH domain maps to 302–368 (KHTMDIAVEA…FTKYLDIDED (67 aa)). Repeat copies occupy residues 364–414 (DIDE…KNAL) and 439–489 (GVDR…RNIC). A 2 X 51 AA approximate repeats region spans residues 364–489 (DIDEDFATVL…ALIMAARNIC (126 aa)).

The protein belongs to the NusA family. As to quaternary structure, monomer. Binds directly to the core enzyme of the DNA-dependent RNA polymerase and to nascent RNA.

The protein localises to the cytoplasm. Functionally, participates in both transcription termination and antitermination. The protein is Transcription termination/antitermination protein NusA of Shigella flexneri.